Here is a 94-residue protein sequence, read N- to C-terminus: Signal peptidase complex subunit 1 (94 aa).

An N-acetylserine modification is found at serine 2. Residues 2–28 are Cytoplasmic-facing; the sequence is SEILQDVQRKLVFPIDFPSQRKTEKFQ. The chain crosses the membrane as a helical span at residues 29–49; sequence QLSLMIGALVACILGFAQQSL. Lysine 50 is a topological domain (lumenal). A helical membrane pass occupies residues 51 to 71; sequence VLLTAYGISCVITLICVLPAY. At 72–94 the chain is on the cytoplasmic side; the sequence is PWYNKQKLRWAQPKIEINVDQYD.

The protein belongs to the SPCS1 family. As to quaternary structure, component of the signal peptidase complex (SPC) composed of a catalytic subunit SEC11 and three accessory subunits SPC1, SPC2 and SPC3. The complex induces a local thinning of the ER membrane which is used to measure the length of the signal peptide (SP) h-region of protein substrates. This ensures the selectivity of the complex towards h-regions shorter than 18-20 amino acids. SPC associates with the translocon complex. Interacts with SBH1 and SEB2/SBH2.

The protein resides in the endoplasmic reticulum membrane. Component of the signal peptidase complex (SPC) which catalyzes the cleavage of N-terminal signal sequences from nascent proteins as they are translocated into the lumen of the endoplasmic reticulum. Dispensable for SPC enzymatic activity. The protein is Signal peptidase complex subunit 1 (SPC1) of Saccharomyces cerevisiae (strain ATCC 204508 / S288c) (Baker's yeast).